A 506-amino-acid polypeptide reads, in one-letter code: Serine/threonine-protein kinase D6PKL1 (506 aa).

The disordered stretch occupies residues 1–96 (MASKYGSGVL…TCSSFSGNNK (96 aa)). Residues 12-23 (ENKKEKGDKETP) are compositionally biased toward basic and acidic residues. Residues 24–54 (ETSYSSQSVSVNTLADQVSSTLSFAPSSDSK) are compositionally biased toward polar residues. The segment covering 55–67 (TGGEVKFNEKSDQ) has biased composition (basic and acidic residues). Positions 77–92 (STSSDISDESTCSSFS) are enriched in low complexity. The Protein kinase domain maps to 123-456 (FRLLKRLGCG…ATEMKQHPFF (334 aa)). ATP-binding positions include 129 to 137 (LGCGDIGTV) and Lys152. Asp248 functions as the Proton acceptor in the catalytic mechanism. The segment at 475 to 495 (PVDYESAPATPAAATSTSVKS) is disordered. Over residues 480–492 (SAPATPAAATSTS) the composition is skewed to low complexity.

Belongs to the protein kinase superfamily. AGC Ser/Thr protein kinase family.

The protein resides in the cell membrane. It carries out the reaction L-seryl-[protein] + ATP = O-phospho-L-seryl-[protein] + ADP + H(+). The enzyme catalyses L-threonyl-[protein] + ATP = O-phospho-L-threonyl-[protein] + ADP + H(+). Protein kinase that regulates the auxin transport activity of PIN auxin efflux facilitators by direct phosphorylation. D6PK-mediated PIN phosphorylation promotes auxin transport in the hypocotyl and this is a prerequisite for PHOT1-dependent hypocotyl bending. The chain is Serine/threonine-protein kinase D6PKL1 (D6PKL1) from Arabidopsis thaliana (Mouse-ear cress).